The primary structure comprises 359 residues: Phospho-N-acetylmuramoyl-pentapeptide-transferase (359 aa).

The next 10 helical transmembrane spans lie at 3–23, 55–75, 80–100, 117–137, 156–176, 187–207, 231–251, 255–275, 280–300, and 334–354; these read QILI…PALI, VAII…GLAF, ISAS…VGFL, TAKT…ALGF, IATV…VVSA, LDGL…LITF, LAIV…WNAA, IFMG…ISVT, ILAV…VLQI, and FWLL…GEWL.

Belongs to the glycosyltransferase 4 family. MraY subfamily. Mg(2+) serves as cofactor.

The protein resides in the cell membrane. The enzyme catalyses UDP-N-acetyl-alpha-D-muramoyl-L-alanyl-gamma-D-glutamyl-meso-2,6-diaminopimeloyl-D-alanyl-D-alanine + di-trans,octa-cis-undecaprenyl phosphate = di-trans,octa-cis-undecaprenyl diphospho-N-acetyl-alpha-D-muramoyl-L-alanyl-D-glutamyl-meso-2,6-diaminopimeloyl-D-alanyl-D-alanine + UMP. It participates in cell wall biogenesis; peptidoglycan biosynthesis. Catalyzes the initial step of the lipid cycle reactions in the biosynthesis of the cell wall peptidoglycan: transfers peptidoglycan precursor phospho-MurNAc-pentapeptide from UDP-MurNAc-pentapeptide onto the lipid carrier undecaprenyl phosphate, yielding undecaprenyl-pyrophosphoryl-MurNAc-pentapeptide, known as lipid I. This Mycolicibacterium paratuberculosis (strain ATCC BAA-968 / K-10) (Mycobacterium paratuberculosis) protein is Phospho-N-acetylmuramoyl-pentapeptide-transferase.